Here is a 373-residue protein sequence, read N- to C-terminus: StAR-related lipid transfer protein 7, mitochondrial (373 aa).

The N-terminal 61 residues, M1–L61, are a transit peptide targeting the mitochondrion. Positions D89–I114 form a coiled coil. One can recognise an START domain in the interval F115–N330. Disordered regions lie at residues S118–E141 and S347–A373.

Post-translationally, proteolytically cleaved by PARL. As to expression, expressed in epithelial cells of airways, peripheral bronchioles and alveoli, as well as in the basal cell layer of the epidermis (at protein level).

The protein localises to the mitochondrion. May play a protective role in mucosal tissues by preventing exaggerated allergic responses. This Mus musculus (Mouse) protein is StAR-related lipid transfer protein 7, mitochondrial (Stard7).